A 2931-amino-acid chain; its full sequence is Probable polyketide synthase 9/36 (2931 aa).

The 432-residue stretch at 11–442 (EKGVAIVGIG…GSNCCLLISE (432 aa)) folds into the Ketosynthase family 3 (KS3) domain. Active-site for beta-ketoacyl synthase activity residues include C181, H323, and H362. The tract at residues 635–668 (GVNPSFILGHSLGEISASYCSGMIDLDTFCYTVY) is acyl/malonyl transferase. S645 serves as the catalytic For acyl/malonyl transferase activity. The interval 925–1047 (IDHLGTSNSY…ANFQLLDHGN (123 aa)) is N-terminal hotdog fold. The region spanning 925 to 1209 (IDHLGTSNSY…CKSLIPIKDS (285 aa)) is the PKS/mFAS DH domain. The active-site Proton acceptor; for dehydratase activity is the H959. A C-terminal hotdog fold region spans residues 1064 to 1209 (NLSKLTKNEL…CKSLIPIKDS (146 aa)). D1122 acts as the Proton donor; for dehydratase activity in catalysis. The chain crosses the membrane as a helical span at residues 2293 to 2313 (LINFVMASSAISLIGSTDLCT). A Carrier domain is found at 2429–2506 (TGNKNIDELF…TSMKMILNSL (78 aa)). S2466 carries the O-(pantetheine 4'-phosphoryl)serine modification. A helical transmembrane segment spans residues 2553–2573 (KIILLTGTTGFLGGFLLFNMV).

Requires pantetheine 4'-phosphate as cofactor.

The protein localises to the membrane. Probable polyketide synthase. This is Probable polyketide synthase 9/36 (pks9) from Dictyostelium discoideum (Social amoeba).